A 282-amino-acid chain; its full sequence is Bis(5'-nucleosyl)-tetraphosphatase, symmetrical (282 aa).

Belongs to the Ap4A hydrolase family.

It carries out the reaction P(1),P(4)-bis(5'-adenosyl) tetraphosphate + H2O = 2 ADP + 2 H(+). Hydrolyzes diadenosine 5',5'''-P1,P4-tetraphosphate to yield ADP. The polypeptide is Bis(5'-nucleosyl)-tetraphosphatase, symmetrical (Salmonella arizonae (strain ATCC BAA-731 / CDC346-86 / RSK2980)).